Reading from the N-terminus, the 411-residue chain is Anthranilate synthase component 1 (411 aa).

Residues Ser27 and Pro203–Met205 each bind L-tryptophan. Position 237-238 (Gly237–Thr238) interacts with chorismate. Glu262 contributes to the Mg(2+) binding site. Residues Tyr350, Arg369, Gly382–Gly384, and Gly384 contribute to the chorismate site. Glu397 provides a ligand contact to Mg(2+).

Belongs to the anthranilate synthase component I family. As to quaternary structure, heterotetramer consisting of two non-identical subunits: a beta subunit (TrpG) and a large alpha subunit (TrpE). The cofactor is Mg(2+).

It carries out the reaction chorismate + L-glutamine = anthranilate + pyruvate + L-glutamate + H(+). It functions in the pathway amino-acid biosynthesis; L-tryptophan biosynthesis; L-tryptophan from chorismate: step 1/5. With respect to regulation, feedback inhibited by tryptophan. Functionally, part of a heterotetrameric complex that catalyzes the two-step biosynthesis of anthranilate, an intermediate in the biosynthesis of L-tryptophan. In the first step, the glutamine-binding beta subunit (TrpG) of anthranilate synthase (AS) provides the glutamine amidotransferase activity which generates ammonia as a substrate that, along with chorismate, is used in the second step, catalyzed by the large alpha subunit of AS (TrpE) to produce anthranilate. In the absence of TrpG, TrpE can synthesize anthranilate directly from chorismate and high concentrations of ammonia. This chain is Anthranilate synthase component 1 (trpE), found in Archaeoglobus fulgidus (strain ATCC 49558 / DSM 4304 / JCM 9628 / NBRC 100126 / VC-16).